The sequence spans 798 residues: Bromodomain-containing protein 2 (798 aa).

Position 1 is an N-acetylmethionine (Met-1). A disordered region spans residues 1–21 (MLQNVTPHKLPGEGNAGLLGL). Phosphothreonine is present on Thr-6. Residue Ser-36 is modified to Phosphoserine. A disordered region spans residues 53-72 (LQLAPANPPPPEVSNPKKPG). In terms of domain architecture, Bromo 1 spans 73 to 179 (RVTNQLQYLH…KIFLQKVASM (107 aa)). A protein-binding residues include Asp-111, Tyr-154, Asn-155, Lys-156, Asp-159, and Asp-160. Disordered stretches follow at residues 267 to 348 (PPAQ…LSEQ), 454 to 645 (DEPL…YDEK), and 736 to 798 (KRLQ…SDSG). A compositionally biased stretch (low complexity) spans 284–297 (TTTPTPTAILAPGS). Phosphoserine occurs at positions 297, 300, and 304. Basic and acidic residues predominate over residues 315-331 (MRRESGRPIKPPRKDLP). A Bromo 2 domain is found at 343-452 (GKLSEQLKHC…DVFEFRYAKM (110 aa)). Residues 480–512 (SSEESSSESSSEEEEEEEEDEDEEESESSDSEE) show a composition bias toward acidic residues. The segment covering 542–564 (KPKRKREKKEKKKKRKAEKHRGR) has biased composition (basic residues). The Nuclear localization signal signature appears at 553-557 (KKKRK). One can recognise an NET domain in the interval 630-712 (DSEEEEESRP…SCLRKKPRKP (83 aa)). Phosphoserine is present on Ser-631. A compositionally biased stretch (low complexity) spans 772–792 (SASSSSSDSSSSSSSSSSSDT).

It belongs to the BET family. As to quaternary structure, homodimer. Interacts with E2F1. Interacts with (acetylated) STAT3; promoting STAT3 recruitment to chromatin. Interacts with CTCF; promoting BRD2 recruitment to chromatin. In terms of tissue distribution, predominantly expressed in the testis, followed by ovary, placenta, embryo and to a lower extent in somatic tissues.

The protein localises to the nucleus. Its subcellular location is the chromosome. Functionally, chromatin reader protein that specifically recognizes and binds histone H4 acetylated at 'Lys-5' and 'Lys-12' (H4K5ac and H4K12ac, respectively), thereby controlling gene expression and remodeling chromatin structures. Recruits transcription factors and coactivators to target gene sites, and activates RNA polymerase II machinery for transcriptional elongation. Plays a key role in genome compartmentalization via its association with CTCF and cohesin: recruited to chromatin by CTCF and promotes formation of topologically associating domains (TADs) via its ability to bind acetylated histones, contributing to CTCF boundary formation and enhancer insulation. Also recognizes and binds acetylated non-histone proteins, such as STAT3. Involved in inflammatory response by regulating differentiation of naive CD4(+) T-cells into T-helper Th17: recognizes and binds STAT3 acetylated at 'Lys-87', promoting STAT3 recruitment to chromatin. In addition to acetylated lysines, also recognizes and binds lysine residues on histones that are both methylated and acetylated on the same side chain to form N6-acetyl-N6-methyllysine (Kacme), an epigenetic mark of active chromatin associated with increased transcriptional initiation. Specifically binds histone H4 acetyl-methylated at 'Lys-5' and 'Lys-12' (H4K5acme and H4K12acme, respectively). This Mus musculus (Mouse) protein is Bromodomain-containing protein 2.